Reading from the N-terminus, the 476-residue chain is Ureidoglycolate hydrolase (476 aa).

The N-terminal stretch at 1–25 is a signal peptide; sequence MESLKRFLCSIALLLISLLLPSSLA. The Mn(2+) site is built by histidine 138, aspartate 149, glutamate 184, and histidine 254. Substrate is bound by residues 183–184, 254–257, histidine 290, asparagine 340, arginine 353, 423–424, and histidine 448; these read EE, HIEQ, and YH. Residues 276 to 391 form an involved in dimerization region; the sequence is APASLKVEFE…LSEFKIVNQD (116 aa). Residue histidine 448 coordinates Mn(2+).

This sequence belongs to the peptidase M20 family. As to quaternary structure, homodimer. The cofactor is Mn(2+). Requires Ni(2+) as cofactor. Co(2+) serves as cofactor.

It is found in the endoplasmic reticulum. The catalysed reaction is (S)-ureidoglycolate + H2O + 2 H(+) = glyoxylate + 2 NH4(+) + CO2. It participates in nitrogen metabolism; (S)-allantoin degradation; glyoxylate from (S)-ureidoglycolate: step 1/1. Its function is as follows. Involved in the catabolism of purine nucleotides. Can use (S)-ureidoglycolate as substrate, but not (R)-ureidoglycolate or allantoate. The sequential activity of AAH, UGLYAH and UAH allows a complete purine breakdown without the intermediate generation of urea. The polypeptide is Ureidoglycolate hydrolase (Arabidopsis thaliana (Mouse-ear cress)).